The following is a 367-amino-acid chain: Innexin inx2 (367 aa).

The Cytoplasmic portion of the chain corresponds to 1–22 (MFDVFGSVKGLLKIDQVCIDNN). Residues 23–43 (VFRMHYKATVIILIAFSLLVT) form a helical membrane-spanning segment. At 44-109 (SRQYIGDPID…EDEVKYHKYY (66 aa)) the chain is on the extracellular side. Residues 110 to 130 (QWVCFVLFFQAILFYVPRYLW) traverse the membrane as a helical segment. The interaction with shg stretch occupies residues 130 to 179 (WKSWEGGRLKMLVMDLNSPIVNDECKNDRKKILVDYFIGNLNRHNFYAFR). The Cytoplasmic portion of the chain corresponds to 131–179 (KSWEGGRLKMLVMDLNSPIVNDECKNDRKKILVDYFIGNLNRHNFYAFR). A helical membrane pass occupies residues 180–200 (FFVCEALNFVNVIGQIYFVDF). The Extracellular segment spans residues 201 to 266 (FLDGEFSTYG…VLPLNIVNEK (66 aa)). Residues 267 to 287 (IYVFLWFWFIILSIMSGISLI) form a helical membrane-spanning segment. Residues 288 to 367 (YRIAVVAGPK…HSAHKRPFDA (80 aa)) lie on the Cytoplasmic side of the membrane.

It belongs to the pannexin family. Monomer and heterooligomer with ogre or Inx3 (via cytoplasmic C-terminal region). Interacts (via cytoplasmic loop) with shg (via cytoplasmic region). Interacts with arm. In ovary, expressed in inner germarial sheath cells, prefollicular cells, follicle cells, nurse cells and oocytes. Expressed in embryonic epithelial cells. Expressed in foregut and hindgut from stage 11-17, segmentally repeated tracheal placodes at stage 14, salivary gland at stage 16 and proventriculus at stage 16-17 (at protein level). During germband extension stage (stage 7), expressed in epidermal epithelial cells. Expressed in cephalic furrow. Repeating epidermal pattern emerges at stage 11, refines to one or two cells at each side of the segment borders by stage 13. Expressed in the imaginal wing disk. In pupae, expressed in the CNS and in primary, secondary and tertiary pigment cells of the retina. Expressed in optic lamina of the adult CNS.

It is found in the cell membrane. Its subcellular location is the cell junction. The protein localises to the gap junction. It localises to the cytoplasm. The protein resides in the apical cell membrane. It is found in the apicolateral cell membrane. Its subcellular location is the basolateral cell membrane. The protein localises to the lateral cell membrane. In terms of biological role, structural components of the gap junctions. Involved in gap junctional communication between germline and somatic cells which is essential for normal oogenesis. In embryonic epidermis, required for epithelial morphogenesis. Required for keyhole formation during early stages of proventriculus development in response to wg signaling. In follicle cells, promotes the formation of egg chambers in part through regulation of shg and baz at the boundary between germ cells and follicle cells. In inner germarial sheath cells, required for survival of early germ cells and for cyst formation. This is Innexin inx2 (Inx2) from Drosophila melanogaster (Fruit fly).